Here is a 168-residue protein sequence, read N- to C-terminus: Phosphopantetheine adenylyltransferase (168 aa).

Substrate is bound at residue Thr-10. Residues 10 to 11 (TF) and His-18 contribute to the ATP site. Substrate-binding residues include Lys-42, Leu-75, and Arg-89. ATP is bound by residues 90-92 (GVR), Glu-100, and 125-131 (YTYVASS).

The protein belongs to the bacterial CoaD family. Homohexamer. Mg(2+) is required as a cofactor.

The protein localises to the cytoplasm. The catalysed reaction is (R)-4'-phosphopantetheine + ATP + H(+) = 3'-dephospho-CoA + diphosphate. It participates in cofactor biosynthesis; coenzyme A biosynthesis; CoA from (R)-pantothenate: step 4/5. Functionally, reversibly transfers an adenylyl group from ATP to 4'-phosphopantetheine, yielding dephospho-CoA (dPCoA) and pyrophosphate. This Prosthecochloris aestuarii (strain DSM 271 / SK 413) protein is Phosphopantetheine adenylyltransferase.